The following is a 194-amino-acid chain: Aminodeoxychorismate/anthranilate synthase component 2 (194 aa).

The Glutamine amidotransferase type-1 domain maps to 1-194 (MILMIDNYDS…IETYRKEVIA (194 aa)). Active-site residues include Cys-79, His-168, and Glu-170.

In terms of assembly, monomer. Heterodimer consisting of two non-identical subunits: a glutamine amidotransferase subunit (PabA) and a aminodeoxychorismate synthase subunit (PabB).

The catalysed reaction is chorismate + L-glutamine = anthranilate + pyruvate + L-glutamate + H(+). The enzyme catalyses chorismate + L-glutamine = 4-amino-4-deoxychorismate + L-glutamate. It functions in the pathway amino-acid biosynthesis; L-tryptophan biosynthesis; L-tryptophan from chorismate: step 1/5. It participates in cofactor biosynthesis; tetrahydrofolate biosynthesis; 4-aminobenzoate from chorismate: step 1/2. Its function is as follows. Part of a heterodimeric complex that catalyzes the two-step biosynthesis of 4-amino-4-deoxychorismate (ADC), a precursor of p-aminobenzoate (PABA) and tetrahydrofolate. In the first step, a glutamine amidotransferase (PabA) generates ammonia as a substrate that, along with chorismate, is used in the second step, catalyzed by aminodeoxychorismate synthase (PabB) to produce ADC. PabA converts glutamine into glutamate only in the presence of stoichiometric amounts of PabB. Also involved in the biosynthesis of anthranilate. Complements a glutamine amidotransferase-negative mutant. This is Aminodeoxychorismate/anthranilate synthase component 2 from Bacillus subtilis (strain 168).